The chain runs to 216 residues: MAGQGKPQIQFKLVLVGDGGTGKTTFMKRHLTGEFEKEYVATLGVEVHTLVFHTNRGPIKFNVWDTAGQEKFGGLRDGYYIQAQCAIIMFDVTSRVTYKNVPSWHKDLVRVCENIPIVLCGNKVDIKDMKVKAKPILFHRKKNLQYYDISAKSNYNFEKPFFWLARKLIGDPNLEFVAMPALAPPEVVMDPALAAQYEHDLEVAQTTALPDEEDDL.

A2 bears the N-acetylalanine mark. The region spanning 7-171 (PQIQFKLVLV…FWLARKLIGD (165 aa)) is the Small GTPase Ran-type domain. 17-24 (GDGGTGKT) contributes to the GTP binding site. T24 carries the post-translational modification Phosphothreonine. Positions 37-45 (KEYVATLGV) are switch-I. Position 60 is an N6-acetyllysine (K60). 65–69 (DTAGQ) contributes to the GTP binding site. The tract at residues 68 to 84 (GQEKFGGLRDGYYIQAQ) is switch-II. At K71 the chain carries N6-acetyllysine; alternate. Residue K71 forms a Glycyl lysine isopeptide (Lys-Gly) (interchain with G-Cter in SUMO2); alternate linkage. K71 participates in a covalent cross-link: Glycyl lysine isopeptide (Lys-Gly) (interchain with G-Cter in ubiquitin); alternate. At K99 the chain carries N6-acetyllysine. GTP is bound at residue 122–125 (NKVD). K134 carries the N6-acetyllysine modification. K152 participates in a covalent cross-link: Glycyl lysine isopeptide (Lys-Gly) (interchain with G-Cter in SUMO2). K159 bears the N6-acetyllysine; alternate mark. K159 is modified (N6-succinyllysine; alternate).

The protein belongs to the small GTPase superfamily. Ran family. Testis specific.

The protein localises to the nucleus. The catalysed reaction is GTP + H2O = GDP + phosphate + H(+). GTP-binding protein involved in nucleocytoplasmic transport. Required for the import of protein into the nucleus and also for RNA export. Involved in chromatin condensation and control of cell cycle. In Rattus norvegicus (Rat), this protein is GTP-binding nuclear protein Ran, testis-specific isoform (Rasl2-9).